The chain runs to 369 residues: 3,4-dihydroxy-2-butanone 4-phosphate synthase (369 aa).

The segment at 1 to 201 (MAFDRIEDII…IADLIHYRLS (201 aa)) is DHBP synthase. D-ribulose 5-phosphate-binding positions include 27-28 (RE), Asp-32, 140-144 (RAGHT), and Glu-164. Glu-28 provides a ligand contact to Mg(2+). His-143 contributes to the Mg(2+) binding site. Residues 202-369 (TEHTIVRIGE…EVIESIPFPG (168 aa)) are GTP cyclohydrolase II-like.

It in the N-terminal section; belongs to the DHBP synthase family. This sequence in the C-terminal section; belongs to the GTP cyclohydrolase II family. Mg(2+) is required as a cofactor. Requires Mn(2+) as cofactor.

It carries out the reaction D-ribulose 5-phosphate = (2S)-2-hydroxy-3-oxobutyl phosphate + formate + H(+). It participates in cofactor biosynthesis; riboflavin biosynthesis; 2-hydroxy-3-oxobutyl phosphate from D-ribulose 5-phosphate: step 1/1. Functionally, catalyzes the conversion of D-ribulose 5-phosphate to formate and 3,4-dihydroxy-2-butanone 4-phosphate. This chain is 3,4-dihydroxy-2-butanone 4-phosphate synthase (ribB), found in Pseudomonas syringae pv. tomato (strain ATCC BAA-871 / DC3000).